The sequence spans 256 residues: tRNA (guanine-N(7)-)-methyltransferase (256 aa).

S-adenosyl-L-methionine-binding residues include E85, E110, D137, and D159. D159 is a catalytic residue. Positions 163 and 195 each coordinate substrate.

Belongs to the class I-like SAM-binding methyltransferase superfamily. TrmB family.

The enzyme catalyses guanosine(46) in tRNA + S-adenosyl-L-methionine = N(7)-methylguanosine(46) in tRNA + S-adenosyl-L-homocysteine. Its pathway is tRNA modification; N(7)-methylguanine-tRNA biosynthesis. Functionally, catalyzes the formation of N(7)-methylguanine at position 46 (m7G46) in tRNA. This is tRNA (guanine-N(7)-)-methyltransferase from Rhodopseudomonas palustris (strain HaA2).